We begin with the raw amino-acid sequence, 206 residues long: Large ribosomal subunit protein uL4 (206 aa).

The disordered stretch occupies residues 43–78; it reads ARSGNRKQKDREEVKHTTKKPWRQKGTGRARAGMSS. Residues 49-58 are compositionally biased toward basic and acidic residues; that stretch reads KQKDREEVKH. Positions 59–70 are enriched in basic residues; it reads TTKKPWRQKGTG.

The protein belongs to the universal ribosomal protein uL4 family. As to quaternary structure, part of the 50S ribosomal subunit.

Functionally, one of the primary rRNA binding proteins, this protein initially binds near the 5'-end of the 23S rRNA. It is important during the early stages of 50S assembly. It makes multiple contacts with different domains of the 23S rRNA in the assembled 50S subunit and ribosome. Its function is as follows. Forms part of the polypeptide exit tunnel. This Cupriavidus metallidurans (strain ATCC 43123 / DSM 2839 / NBRC 102507 / CH34) (Ralstonia metallidurans) protein is Large ribosomal subunit protein uL4.